Consider the following 177-residue polypeptide: Large ribosomal subunit protein uL6 (177 aa).

Belongs to the universal ribosomal protein uL6 family. Part of the 50S ribosomal subunit.

This protein binds to the 23S rRNA, and is important in its secondary structure. It is located near the subunit interface in the base of the L7/L12 stalk, and near the tRNA binding site of the peptidyltransferase center. The protein is Large ribosomal subunit protein uL6 of Yersinia pseudotuberculosis serotype O:1b (strain IP 31758).